Consider the following 217-residue polypeptide: Ribonuclease HII 2 (217 aa).

The RNase H type-2 domain occupies 28 to 217; sequence GLLAGVDEAG…VREVLLERRP (190 aa). Positions 34, 35, and 126 each coordinate a divalent metal cation.

It belongs to the RNase HII family. Mn(2+) is required as a cofactor. It depends on Mg(2+) as a cofactor.

It localises to the cytoplasm. It catalyses the reaction Endonucleolytic cleavage to 5'-phosphomonoester.. Its function is as follows. Endonuclease that specifically degrades the RNA of RNA-DNA hybrids. The polypeptide is Ribonuclease HII 2 (Methylibium petroleiphilum (strain ATCC BAA-1232 / LMG 22953 / PM1)).